A 644-amino-acid chain; its full sequence is Beta-mannosyltransferase 2 (644 aa).

Residues 1–6 (MRTRLN) lie on the Cytoplasmic side of the membrane. The chain crosses the membrane as a helical span at residues 7–27 (FLLLCIASVLSVIWIGVLLTW). Residues 28 to 644 (NDNNLGGISL…NDKKDLKIRQ (617 aa)) are Extracellular-facing. An N-linked (GlcNAc...) asparagine glycan is attached at asparagine 484. Residues 512–644 (TRGEAERRRR…NDKKDLKIRQ (133 aa)) are a coiled coil. The tract at residues 517 to 644 (ERRRRVAEER…NDKKDLKIRQ (128 aa)) is disordered.

The protein belongs to the BMT family.

It is found in the membrane. Its function is as follows. Beta-mannosyltransferase involved in cell wall biosynthesis. Initiates the beta-mannosylation of core N-linked glycans. The sequence is that of Beta-mannosyltransferase 2 (BMT2) from Komagataella phaffii (strain GS115 / ATCC 20864) (Yeast).